Consider the following 262-residue polypeptide: L-aspartate dehydrogenase (262 aa).

NAD(+) contacts are provided by alanine 128 and asparagine 183. The active site involves histidine 213.

The protein belongs to the L-aspartate dehydrogenase family.

It carries out the reaction L-aspartate + NADP(+) + H2O = oxaloacetate + NH4(+) + NADPH + H(+). The enzyme catalyses L-aspartate + NAD(+) + H2O = oxaloacetate + NH4(+) + NADH + H(+). It functions in the pathway cofactor biosynthesis; NAD(+) biosynthesis; iminoaspartate from L-aspartate (dehydrogenase route): step 1/1. Functionally, specifically catalyzes the NAD or NADP-dependent dehydrogenation of L-aspartate to iminoaspartate. The chain is L-aspartate dehydrogenase from Methanopyrus kandleri (strain AV19 / DSM 6324 / JCM 9639 / NBRC 100938).